Reading from the N-terminus, the 188-residue chain is Putative 3-methyladenine DNA glycosylase (188 aa).

It belongs to the DNA glycosylase MPG family.

This Ehrlichia ruminantium (Cowdria ruminantium) protein is Putative 3-methyladenine DNA glycosylase.